We begin with the raw amino-acid sequence, 156 residues long: MKLQLIAVGTKMPKWVEEGYKEYSRRFPKDMPLELIEITAGKRGKNADIARILQKEGEAMLAAVPKGNRIVTLDIPGKPWNTEQLAEQLEVWKLDARDVSILIGGPEGLSPACKTAAEQSWSLSPLTLPHPLVRVVMAESLYRAWSITANHPYHRE.

Residues Leu73, Gly104, and 123–128 (LSPLTL) each bind S-adenosyl-L-methionine.

It belongs to the RNA methyltransferase RlmH family. Homodimer.

The protein resides in the cytoplasm. The catalysed reaction is pseudouridine(1915) in 23S rRNA + S-adenosyl-L-methionine = N(3)-methylpseudouridine(1915) in 23S rRNA + S-adenosyl-L-homocysteine + H(+). Specifically methylates the pseudouridine at position 1915 (m3Psi1915) in 23S rRNA. This is Ribosomal RNA large subunit methyltransferase H from Aliivibrio salmonicida (strain LFI1238) (Vibrio salmonicida (strain LFI1238)).